The primary structure comprises 612 residues: Cytoplasmic dynein 1 intermediate chain 2 (612 aa).

2 stretches are compositionally biased toward basic and acidic residues: residues 1–13 and 20–43; these read MSDK…ELER and QIRE…KKEA. The interval 1–188 is disordered; that stretch reads MSDKSDLKAE…PHELTEEEKQ (188 aa). Residue serine 2 is modified to N-acetylserine. A Diphosphoserine modification is found at serine 51. Phosphoserine occurs at positions 51 and 84. The span at 82 to 91 shows a compositional bias: low complexity; it reads PSSKSVSTPS. Phosphothreonine is present on threonine 89. Phosphoserine occurs at positions 91, 95, and 98. A compositionally biased stretch (basic and acidic residues) spans 164–188; it reads EKTLKKDEENDSKAPPHELTEEEKQ. WD repeat units lie at residues 251–300, 304–344, 353–394, 403–443, 448–493, 496–536, and 542–581; these read SKHR…TTPE, HCQS…RTPV, AHTH…HPQD, SKAV…AGIS, GHQG…PLYS, DNSD…EVPT, and EGNP…AVPR.

It belongs to the dynein intermediate chain family. In terms of assembly, homodimer. The cytoplasmic dynein 1 complex consists of two catalytic heavy chains (HCs) and a number of non-catalytic subunits presented by intermediate chains (ICs), light intermediate chains (LICs) and light chains (LCs); the composition seems to vary in respect to the IC, LIC and LC composition. The heavy chain homodimer serves as a scaffold for the probable homodimeric assembly of the respective non-catalytic subunits. The ICs and LICs bind directly to the HC dimer and the LCs assemble on the IC dimer. Interacts with DYNLT3. Interacts with DYNLT1. Interacts (dephosphorylated at Ser-84) with DCTN1. Interacts with BICD2. Interacts with SPEF2. Interacts with CFAP61. Post-translationally, the phosphorylation status of Ser-84 appears to be involved in dynactin-dependent target binding. Pyrophosphorylation by 5-diphosphoinositol pentakisphosphate (5-IP7) promotes interaction with DCTN1. Serine pyrophosphorylation is achieved by Mg(2+)-dependent, but enzyme independent transfer of a beta-phosphate from a inositol pyrophosphate to a pre-phosphorylated serine residue.

It localises to the cytoplasm. Its subcellular location is the cytoskeleton. Its function is as follows. Acts as one of several non-catalytic accessory components of the cytoplasmic dynein 1 complex that are thought to be involved in linking dynein to cargos and to adapter proteins that regulate dynein function. Cytoplasmic dynein 1 acts as a motor for the intracellular retrograde motility of vesicles and organelles along microtubules. The intermediate chains mediate the binding of dynein to dynactin via its 150 kDa component (p150-glued) DCTN1. Involved in membrane-transport, such as Golgi apparatus, late endosomes and lysosomes. This Mus musculus (Mouse) protein is Cytoplasmic dynein 1 intermediate chain 2 (Dync1i2).